We begin with the raw amino-acid sequence, 727 residues long: Prolyl endopeptidase-like (727 aa).

N-acetylmethionine is present on Met1. Catalysis depends on charge relay system residues Ser559, Asp645, and His690.

It belongs to the peptidase S9A family. As to quaternary structure, homodimer. Interacts with the AP-1 complex. Expressed in pyramidal neurons of the temporal cortex and neocortex (at protein level). Widely expressed. Expressed at higher level in brain, skeletal muscle, heart and kidney. Expressed at the endplates in the neuromuscular junction.

The protein localises to the cytoplasm. Its subcellular location is the cytosol. It localises to the golgi apparatus. It is found in the trans-Golgi network. The protein resides in the cytoskeleton. The protein localises to the nucleus. Inhibited by PMSF and Prefabloc, as well as leupeptin at high concentrations. Partially inhibited by TPCK, a chymotrypsin inhibitor and E64, a cysteine protease inhibitor. Not affected by 4-amidinophenyl-methanesulfonyl fluoride (APMSF), pepstatin or EDTA. Inhibited by 1-isobutyl-3-oxo-3,5,6,7-tetrahydro-2H-cyclopenta[c]pyridine-4-carbonitrile. In terms of biological role, serine peptidase whose precise substrate specificity remains unclear. Does not cleave peptides after a arginine or lysine residue. Regulates trans-Golgi network morphology and sorting by regulating the membrane binding of the AP-1 complex. May play a role in the regulation of synaptic vesicle exocytosis. The chain is Prolyl endopeptidase-like (PREPL) from Homo sapiens (Human).